The primary structure comprises 494 residues: MALRVYNTLTGTKEDFVPIEPGKVKMYVCGVTVYDHCHIGHARANVVFDVIYRYLRSLGLEVNYVRNYTDIDDKIINRANREGVAYDAISERFIKEFDRDMAQLGLLLPTSQPKATEHIPEIITLVQTLIDKGFAYQMGGDVNFCVEKFDPYLKLSKRNLEDMQAGARIEVDERKRHPMDFVLWKEAKPGEPFWESPWGKGRPGWHIECSAMSMKYLGETFDIHGGGKDLVFPHHENEIAQSEAASGKPFVKYWLHNGFVNINSEKMSKSLGNFFTIKEVLDKYDSEVLRFFLLSAHYRSPLDFSDQNLTEAETGMERIYKALVAIDETLASNPATGGEEIDASSLGEAERELFDKSGSLPLRFREAMDDDFNTALAMGHIFDLVRCVNRVLSEAKERSNTLSALCAQVKANIGKIADVLGIFTSEPASLLTRLKDRKASELDISVEEIERLITERAAARKAKDFKRSDEIRDFLLGKNIVLLDSAQGTSWSVK.

Zn(2+) is bound at residue Cys29. The 'HIGH' region signature appears at 31-41 (VTVYDHCHIGH). 3 residues coordinate Zn(2+): Cys209, His234, and Glu238. A 'KMSKS' region motif is present at residues 266 to 270 (KMSKS). ATP is bound at residue Lys269.

It belongs to the class-I aminoacyl-tRNA synthetase family. As to quaternary structure, monomer. Requires Zn(2+) as cofactor.

It localises to the cytoplasm. The catalysed reaction is tRNA(Cys) + L-cysteine + ATP = L-cysteinyl-tRNA(Cys) + AMP + diphosphate. The sequence is that of Cysteine--tRNA ligase from Geotalea uraniireducens (strain Rf4) (Geobacter uraniireducens).